A 504-amino-acid chain; its full sequence is Cytochrome P450 4A24 (504 aa).

2 helical membrane-spanning segments follow: residues 6–26 and 112–132; these read LASASGLLQVASLLGLLLLLL and VVYRLLIPWIGCGLLLLNGQT. Position 451 (Cys-451) interacts with heme.

The protein belongs to the cytochrome P450 family. The cofactor is heme.

The protein localises to the endoplasmic reticulum membrane. The enzyme catalyses an omega-methyl-long-chain fatty acid + reduced [NADPH--hemoprotein reductase] + O2 = an omega-hydroxy-long-chain fatty acid + oxidized [NADPH--hemoprotein reductase] + H2O + H(+). Functionally, catalyzes the omega- and (omega-1)-hydroxylation of various fatty acids such as laurate and palmitate. Has no activity toward taurochenodeoxycholic acid. The polypeptide is Cytochrome P450 4A24 (CYP4A24) (Sus scrofa (Pig)).